Reading from the N-terminus, the 292-residue chain is NAD kinase (292 aa).

Asp73 functions as the Proton acceptor in the catalytic mechanism. NAD(+) is bound by residues 73–74, 147–148, His158, Arg175, Asp177, 188–193, and Gln247; these read DG, NE, and TAYSLS.

Belongs to the NAD kinase family. A divalent metal cation serves as cofactor.

It is found in the cytoplasm. The enzyme catalyses NAD(+) + ATP = ADP + NADP(+) + H(+). In terms of biological role, involved in the regulation of the intracellular balance of NAD and NADP, and is a key enzyme in the biosynthesis of NADP. Catalyzes specifically the phosphorylation on 2'-hydroxyl of the adenosine moiety of NAD to yield NADP. This Escherichia coli (strain SMS-3-5 / SECEC) protein is NAD kinase.